Reading from the N-terminus, the 385-residue chain is T-box transcription factor TBX10 (385 aa).

A DNA-binding region (T-box) is located at residues 69–252; it reads LEMKPLWEEF…SNPFAKGFRE (184 aa). Disordered stretches follow at residues 283-310 and 328-359; these read GSAE…NQLL and QNLY…AGDQ. A compositionally biased stretch (polar residues) spans 293-307; sequence KASASSSRTPTQPHN. Residues 331 to 347 are compositionally biased toward low complexity; it reads YPGSPSRAGPPRARLAP.

It localises to the nucleus. Its function is as follows. Probable transcriptional regulator involved in developmental processes. This is T-box transcription factor TBX10 (Tbx10) from Mus musculus (Mouse).